Here is a 271-residue protein sequence, read N- to C-terminus: Large ribosomal subunit protein eL8 (271 aa).

It belongs to the eukaryotic ribosomal protein eL8 family.

This chain is Large ribosomal subunit protein eL8 (RpL7A), found in Drosophila melanogaster (Fruit fly).